The primary structure comprises 232 residues: F420-dependent NADP reductase (232 aa).

NADP(+)-binding positions include 15–18 (TGDQ), 37–38 (SR), lysine 42, valine 80, valine 106, and alanine 151.

Belongs to the F420-dependent NADP reductase family. As to quaternary structure, homotetramer.

It catalyses the reaction reduced coenzyme F420-(gamma-L-Glu)(n) + NADP(+) = oxidized coenzyme F420-(gamma-L-Glu)(n) + NADPH + 2 H(+). Catalyzes the reduction of NADP(+) with F420H(2) via hydride transfer, and likely the reverse reaction, i.e. the reduction of F420 with NADPH. Probably functions in the regeneration of NADPH required in biosynthetic reactions. Is specific for reduced F420 as electron donor for the reduction of NADP; neither reduced FAD nor FMN can act as electron donor. The enzyme is also specific for NADP; NAD is not utilized as substrate. The chain is F420-dependent NADP reductase (fno) from Methanothermobacter thermautotrophicus (strain ATCC 29096 / DSM 1053 / JCM 10044 / NBRC 100330 / Delta H) (Methanobacterium thermoautotrophicum).